The sequence spans 330 residues: Delta-aminolevulinic acid dehydratase (330 aa).

Positions 122, 124, 131, and 132 each coordinate Zn(2+). Lys-199 (schiff-base intermediate with substrate) is an active-site residue. Lys-199 is modified (N6-succinyllysine). Residue Arg-209 coordinates 5-aminolevulinate. Phosphoserine is present on Ser-215. A 5-aminolevulinate-binding site is contributed by Arg-221. Cys-223 provides a ligand contact to Zn(2+). Catalysis depends on Lys-252, which acts as the Schiff-base intermediate with substrate. Lys-252 carries the post-translational modification N6-succinyllysine. Residues Ser-279 and Tyr-318 each contribute to the 5-aminolevulinate site.

Belongs to the ALAD family. As to quaternary structure, homooctamer; active form. Homohexamer; low activity form. Zn(2+) is required as a cofactor.

It localises to the cytoplasm. Its subcellular location is the cytosol. The catalysed reaction is 2 5-aminolevulinate = porphobilinogen + 2 H2O + H(+). It participates in porphyrin-containing compound metabolism; protoporphyrin-IX biosynthesis; coproporphyrinogen-III from 5-aminolevulinate: step 1/4. With respect to regulation, can alternate between a fully active homooctamer and a low-activity homohexamer. A bound magnesium ion may promote the assembly of the fully active homooctamer. The magnesium-binding site is absent in the low-activity homohexamer. Inhibited by compounds that favor the hexameric state. Inhibited by divalent lead ions. The lead ions partially displace the zinc cofactor. Functionally, catalyzes an early step in the biosynthesis of tetrapyrroles. Binds two molecules of 5-aminolevulinate per subunit, each at a distinct site, and catalyzes their condensation to form porphobilinogen. This is Delta-aminolevulinic acid dehydratase (Alad) from Rattus norvegicus (Rat).